The chain runs to 390 residues: Flap endonuclease 1-2 (390 aa).

The interval 1 to 108 (MGIHQLMQFL…GELARRKKLK (108 aa)) is N-domain. D34 lines the Mg(2+) pocket. Residue R74 participates in DNA binding. Mg(2+)-binding residues include D90, E162, E164, D183, and D185. Positions 126–254 (QALLQNQRTT…GTAYKLIKEY (129 aa)) are I-domain. E162 is a binding site for DNA. 2 residues coordinate DNA: G232 and D234. D234 serves as a coordination point for Mg(2+). Residues 348–356 (FQSRLENFF) are interaction with PCNA. The segment at 359–390 (TTKIIHPNNSKAKAKSNKKTEQPQKSGGKKKI) is disordered.

Belongs to the XPG/RAD2 endonuclease family. FEN1 subfamily. As to quaternary structure, interacts with PCNA. Three molecules of FEN1 bind to one PCNA trimer with each molecule binding to one PCNA monomer. PCNA stimulates the nuclease activity without altering cleavage specificity. The cofactor is Mg(2+). Phosphorylated. Phosphorylation upon DNA damage induces relocalization to the nuclear plasma.

The protein resides in the nucleus. It is found in the nucleolus. Its subcellular location is the nucleoplasm. It localises to the mitochondrion. Functionally, structure-specific nuclease with 5'-flap endonuclease and 5'-3' exonuclease activities involved in DNA replication and repair. During DNA replication, cleaves the 5'-overhanging flap structure that is generated by displacement synthesis when DNA polymerase encounters the 5'-end of a downstream Okazaki fragment. It enters the flap from the 5'-end and then tracks to cleave the flap base, leaving a nick for ligation. Also involved in the long patch base excision repair (LP-BER) pathway, by cleaving within the apurinic/apyrimidinic (AP) site-terminated flap. Acts as a genome stabilization factor that prevents flaps from equilibrating into structures that lead to duplications and deletions. Also possesses 5'-3' exonuclease activity on nicked or gapped double-stranded DNA, and exhibits RNase H activity. Also involved in replication and repair of rDNA and in repairing mitochondrial DNA. The polypeptide is Flap endonuclease 1-2 (Paramecium tetraurelia).